Reading from the N-terminus, the 213-residue chain is Orotate phosphoribosyltransferase (213 aa).

Residue lysine 26 coordinates 5-phospho-alpha-D-ribose 1-diphosphate. 34 to 35 contacts orotate; sequence FF. Residues 72–73, arginine 99, lysine 100, lysine 103, histidine 105, and 124–132 each bind 5-phospho-alpha-D-ribose 1-diphosphate; these read YK and DDVITAGTA. The orotate site is built by threonine 128 and arginine 156.

The protein belongs to the purine/pyrimidine phosphoribosyltransferase family. PyrE subfamily. As to quaternary structure, homodimer. It depends on Mg(2+) as a cofactor.

It carries out the reaction orotidine 5'-phosphate + diphosphate = orotate + 5-phospho-alpha-D-ribose 1-diphosphate. It functions in the pathway pyrimidine metabolism; UMP biosynthesis via de novo pathway; UMP from orotate: step 1/2. Its function is as follows. Catalyzes the transfer of a ribosyl phosphate group from 5-phosphoribose 1-diphosphate to orotate, leading to the formation of orotidine monophosphate (OMP). The polypeptide is Orotate phosphoribosyltransferase (Cronobacter sakazakii (strain ATCC BAA-894) (Enterobacter sakazakii)).